The chain runs to 546 residues: CTP synthase (546 aa).

The segment at 1 to 269 (MNSNTKIIFV…DAKLVELLNL (269 aa)) is amidoligase domain. CTP is bound at residue Ser-16. Ser-16 contributes to the UTP binding site. Residues 17-22 (SLGKGV) and Asp-74 each bind ATP. Asp-74 and Glu-143 together coordinate Mg(2+). CTP-binding positions include 150–152 (DIE), 190–195 (KTKPTQ), and Lys-226. UTP is bound by residues 190 to 195 (KTKPTQ) and Lys-226. Residues 294 to 546 (TIAMVGKYVS…IQAAIENSNN (253 aa)) enclose the Glutamine amidotransferase type-1 domain. Gly-356 is an L-glutamine binding site. Catalysis depends on Cys-383, which acts as the Nucleophile; for glutamine hydrolysis. L-glutamine contacts are provided by residues 384 to 387 (LGMQ), Glu-407, and Arg-474. Active-site residues include His-519 and Glu-521.

It belongs to the CTP synthase family. In terms of assembly, homotetramer.

The catalysed reaction is UTP + L-glutamine + ATP + H2O = CTP + L-glutamate + ADP + phosphate + 2 H(+). The enzyme catalyses L-glutamine + H2O = L-glutamate + NH4(+). It carries out the reaction UTP + NH4(+) + ATP = CTP + ADP + phosphate + 2 H(+). It participates in pyrimidine metabolism; CTP biosynthesis via de novo pathway; CTP from UDP: step 2/2. Allosterically activated by GTP, when glutamine is the substrate; GTP has no effect on the reaction when ammonia is the substrate. The allosteric effector GTP functions by stabilizing the protein conformation that binds the tetrahedral intermediate(s) formed during glutamine hydrolysis. Inhibited by the product CTP, via allosteric rather than competitive inhibition. In terms of biological role, catalyzes the ATP-dependent amination of UTP to CTP with either L-glutamine or ammonia as the source of nitrogen. Regulates intracellular CTP levels through interactions with the four ribonucleotide triphosphates. The chain is CTP synthase from Francisella tularensis subsp. mediasiatica (strain FSC147).